The chain runs to 275 residues: Elongation factor Ts (275 aa).

The tract at residues 76-79 (TDFV) is involved in Mg(2+) ion dislocation from EF-Tu.

This sequence belongs to the EF-Ts family.

The protein localises to the cytoplasm. In terms of biological role, associates with the EF-Tu.GDP complex and induces the exchange of GDP to GTP. It remains bound to the aminoacyl-tRNA.EF-Tu.GTP complex up to the GTP hydrolysis stage on the ribosome. The protein is Elongation factor Ts of Nocardia farcinica (strain IFM 10152).